We begin with the raw amino-acid sequence, 281 residues long: Clc-like protein 5 (281 aa).

A run of 4 helical transmembrane segments spans residues 13 to 33, 104 to 124, 137 to 157, and 184 to 204; these read LATL…TITP, VLIL…AVIF, IMLD…LIVF, and YYLA…AALV.

This sequence belongs to the Clc family.

The protein localises to the membrane. This Caenorhabditis elegans protein is Clc-like protein 5 (clc-5).